The sequence spans 431 residues: Ribonuclease TTHA0252 (431 aa).

Residues His-59, His-61, Asp-63, His-64, His-141, Asp-162, and His-400 each coordinate Zn(2+).

This sequence belongs to the metallo-beta-lactamase superfamily. RNA-metabolizing metallo-beta-lactamase-like family. Monomer. The cofactor is Zn(2+).

Its subcellular location is the cytoplasm. With respect to regulation, inhibited by cadmium, cobalt, manganese, magnesium, calcium and nickel ions. Functionally, has endoribonuclease activity towards 23S and 16S rRNA (in vitro). The sequence is that of Ribonuclease TTHA0252 from Thermus thermophilus (strain ATCC 27634 / DSM 579 / HB8).